Here is a 366-residue protein sequence, read N- to C-terminus: Galactoside alpha-(1,2)-fucosyltransferase 1 (366 aa).

At 1 to 8 (MWPLSHRH) the chain is on the cytoplasmic side. Residues 9–25 (LCLAFLLVCVLSAISFF) traverse the membrane as a helical; Signal-anchor for type II membrane protein segment. At 26–366 (LHVHQDSFRH…LSPLWTLAEP (341 aa)) the chain is on the lumenal side. 3 N-linked (GlcNAc...) asparagine glycosylation sites follow: asparagine 66, asparagine 302, and asparagine 328.

This sequence belongs to the glycosyltransferase 11 family.

The protein localises to the golgi apparatus. Its subcellular location is the golgi stack membrane. The enzyme catalyses a beta-D-galactosyl-(1-&gt;4)-N-acetyl-beta-D-glucosaminyl derivative + GDP-beta-L-fucose = an alpha-L-Fuc-(1-&gt;2)-beta-D-Gal-(1-&gt;4)-beta-D-GlcNAc derivative + GDP + H(+). It catalyses the reaction a ganglioside GA1 + GDP-beta-L-fucose = a ganglioside Fuc-GA1 + GDP + H(+). The catalysed reaction is a beta-D-Gal-(1-&gt;3)-beta-D-GlcNAc-(1-&gt;3)-beta-D-Gal-(1-&gt;4)-beta-D-Glc-(1&lt;-&gt;1')-Cer(d18:1(4E)) + GDP-beta-L-fucose = alpha-L-fucosyl-(1-&gt;2)- beta-D-galactosyl-(1-&gt;3)-N-acetyl-beta-D-glucosaminyl-(1-&gt;3)-beta-D-galactosyl-(1-&gt;4)-beta-D-glucosyl-(1&lt;-&gt;1')-N-acylsphing-4-enine + GDP + H(+). It carries out the reaction a neolactoside nLc4Cer(d18:1(4E)) + GDP-beta-L-fucose = a neolactoside IV(2)-alpha-Fuc-nLc4Cer(d18:1(4E)) + GDP + H(+). The enzyme catalyses a ganglioside GM1 + GDP-beta-L-fucose = a ganglioside Fuc-GM1 + GDP + H(+). It catalyses the reaction beta-D-galactosyl-(1-&gt;3)-N-acetyl-D-galactosamine + GDP-beta-L-fucose = alpha-L-fucosyl-(1-&gt;2)-beta-D-galactosyl-(1-&gt;3)-N-acetyl-D-galactosamine + GDP + H(+). It participates in protein modification; protein glycosylation. Catalyzes the transfer of L-fucose, from a guanosine diphosphate-beta-L-fucose, to the terminal galactose residue of glycoconjugates through an alpha(1,2) linkage leading to H antigen synthesis that is an intermediate substrate in the synthesis of ABO blood group antigens. H antigen is essential for maturation of the glomerular layer of the main olfactory bulb, in cell migration and early cell-cell contacts during tumor associated angiogenesis. Preferentially fucosylates soluble lactose and to a lesser extent fucosylates glycolipids gangliosides GA1 and GM1a. The polypeptide is Galactoside alpha-(1,2)-fucosyltransferase 1 (Alouatta belzebul (Red-handed howler monkey)).